We begin with the raw amino-acid sequence, 184 residues long: Mitochondrial import inner membrane translocase subunit TIM22 (184 aa).

The segment at 1-26 is disordered; that stretch reads MSLWGVYTGPQPPKKPLQEMTQEEQA. Cystine bridges form between Cys-40–Cys-118 and Cys-137–Cys-156. Helical transmembrane passes span 45–65 and 151–171; these read VMAG…MASM and AALV…MYLN.

Belongs to the Tim17/Tim22/Tim23 family. In terms of assembly, component of the TIM22 complex, whose core is composed of TIM22 and TIM54, associated with the 70 kDa heterohexamer composed of TIM9 and TIM10 (or TIM8 and TIM13).

The protein localises to the mitochondrion inner membrane. Functionally, essential core component of the TIM22 complex, a complex that mediates the import and insertion of multi-pass transmembrane proteins into the mitochondrial inner membrane. In the TIM22 complex, it constitutes the voltage-activated and signal-gated channel. Forms a twin-pore translocase that uses the membrane potential as external driving force in 2 voltage-dependent steps. In Candida albicans (strain SC5314 / ATCC MYA-2876) (Yeast), this protein is Mitochondrial import inner membrane translocase subunit TIM22.